We begin with the raw amino-acid sequence, 533 residues long: Probable anion transporter 4, chloroplastic (533 aa).

12 helical membrane passes run 117–137, 152–172, 179–199, 203–223, 243–263, 267–287, 342–362, 376–396, 417–437, 438–458, 474–494, and 502–522; these read MLAL…VAIV, IVQS…GTLV, VVMA…PWAA, LWAL…ALPC, IAMA…PILM, GIYG…LVWL, VIVA…WMPI, AWFS…AGFW, IGFI…QPLV, ASAW…GFLI, MCLT…GFFV, and GFIL…NIYA.

Belongs to the major facilitator superfamily. Sodium/anion cotransporter (TC 2.A.1.14) family. In terms of tissue distribution, expressed in leaf veins and root tips.

The protein resides in the plastid. Its subcellular location is the chloroplast membrane. In terms of biological role, inorganic phosphate and probable anion transporter. This is Probable anion transporter 4, chloroplastic (ANTR4) from Arabidopsis thaliana (Mouse-ear cress).